The chain runs to 405 residues: 3-isopropylmalate dehydrogenase 2, chloroplastic (405 aa).

A chloroplast-targeting transit peptide spans 1 to 33 (MAAALQTNIRTVKVPATFRAVSKQSLAPFRVRC). The residue at position 70 (S70) is a Phosphoserine. 114–129 (IGGYKWDNNEKHLRPE) lines the NAD(+) pocket. Residues R136, R146, and R174 each contribute to the substrate site. N234 provides a ligand contact to NAD(+). A substrate-binding site is contributed by D264. Residue D264 participates in Mg(2+) binding. N265 is a binding site for NAD(+). Mg(2+)-binding residues include D288 and D292. 318–334 (EPIHGSAPDIAGQDKAN) serves as a coordination point for NAD(+).

This sequence belongs to the isocitrate and isopropylmalate dehydrogenases family. Homodimer. The cofactor is Mg(2+). It depends on Mn(2+) as a cofactor. Expressed at low levels in seedlings, cotyledons, hypocotyls, flowers, roots, pollen, leaves and stems.

The protein localises to the plastid. Its subcellular location is the chloroplast stroma. The catalysed reaction is (2R,3S)-3-isopropylmalate + NAD(+) = 4-methyl-2-oxopentanoate + CO2 + NADH. The protein operates within amino-acid biosynthesis; L-leucine biosynthesis; L-leucine from 3-methyl-2-oxobutanoate: step 3/4. Regulated by a thiol-based redox modification. In terms of biological role, involved in leucine biosynthesis; catalyzes the oxidative decarboxylation step in leucine biosynthesis (primary metabolism). Catalyzes the oxidation of 3-carboxy-2-hydroxy-4-methylpentanoate (3-isopropylmalate, 3-IPM) to 3-carboxy-4-methyl-2-oxopentanoate. The product decarboxylates to 4-methyl-2 oxopentanoate. Required during pollen development and involved in embryo sac development. This is 3-isopropylmalate dehydrogenase 2, chloroplastic from Arabidopsis thaliana (Mouse-ear cress).